A 295-amino-acid polypeptide reads, in one-letter code: Beta-lactamase-like protein 2 homolog (295 aa).

Zn(2+) contacts are provided by histidine 79, histidine 81, aspartate 83, histidine 84, histidine 141, aspartate 160, and histidine 195.

It belongs to the metallo-beta-lactamase superfamily. Glyoxalase II family.

The polypeptide is Beta-lactamase-like protein 2 homolog (Caenorhabditis elegans).